A 426-amino-acid polypeptide reads, in one-letter code: MKHLTEMVRQHKAGKTNGIYAVCSAHPLVLEAAIRYASANQTPLLIEATSNQVDQFGGYTGMTPADFRGFVCQLADSLNFPQDALILGGDHLGPNRWQNLPAAQAMANADDLIKSYVAAGFKKIHLDCSMSCQDDPIPLTDDIVAERAARLAKVAEETCREHFGEADLEYVIGTEVPVPGGAHETLSELAVTTPDAARATLEAHRHAFEKQGLNAIWPRIIALVVQPGVEFDHTNVIDYQPAKAAALSQMVENYETLIFEAHSTDYQTPQSLRQLVIDHFAILKVGPALTFALREALFSLAAIEEELVPAKACSGLRQVLENVMLDRPEYWQSHYHGDGNARRLARGYSYSDRVRYYWPDSQIDDAFAHLIRNLADSPIPLPLISQYLPLQYVKVRSGELQPTPRELIINHIQDILAQYHTACEGQ.

This sequence belongs to the GatZ/KbaZ family. KbaZ subfamily. Forms a complex with KbaY.

It functions in the pathway carbohydrate metabolism; D-tagatose 6-phosphate degradation; D-glyceraldehyde 3-phosphate and glycerone phosphate from D-tagatose 6-phosphate: step 2/2. Its function is as follows. Component of the tagatose-1,6-bisphosphate aldolase KbaYZ that is required for full activity and stability of the Y subunit. Could have a chaperone-like function for the proper and stable folding of KbaY. When expressed alone, KbaZ does not show any aldolase activity. The sequence is that of D-tagatose-1,6-bisphosphate aldolase subunit KbaZ from Escherichia coli O6:K15:H31 (strain 536 / UPEC).